The sequence spans 488 residues: NADH-quinone oxidoreductase subunit N 2 (488 aa).

A run of 14 helical transmembrane segments spans residues 18–38 (FLPEFILLLLAFILFTLELFI), 45–65 (LVLNVVSYVGYFSVLMSLLIP), 81–101 (PLAVTVKIFAVLITLAILPFA), 110–130 (SFYGEFYYILAFTLLGVFVLA), 135–155 (LIILYVALELVSVGFYILTAL), 169–189 (YLILGGLSIALASYGAAFMYI), 210–230 (LVLGLVFFLIGLAVKIGAVPF), 242–262 (PTPVTALMASVGKLAFFIPLV), 274–294 (LVWTITVGVIAALTMLYGNLV), 308–328 (SSIAHSGYIMAGAAVAKVIGM), 331–351 (VIYFLVAYAVMSAGAFLVLAL), 375–395 (IAFAFFVYMVALLGVPPTVGF), 412–434 (WLAFIMILSAAISTGYYIRLVVV), and 458–478 (FALTLASVLLGVLPSLVWFLI).

The protein belongs to the complex I subunit 2 family. NDH-1 is composed of 14 different subunits. Subunits NuoA, H, J, K, L, M, N constitute the membrane sector of the complex.

It is found in the cell inner membrane. It catalyses the reaction a quinone + NADH + 5 H(+)(in) = a quinol + NAD(+) + 4 H(+)(out). Functionally, NDH-1 shuttles electrons from NADH, via FMN and iron-sulfur (Fe-S) centers, to quinones in the respiratory chain. The immediate electron acceptor for the enzyme in this species is believed to be ubiquinone. Couples the redox reaction to proton translocation (for every two electrons transferred, four hydrogen ions are translocated across the cytoplasmic membrane), and thus conserves the redox energy in a proton gradient. This Aquifex aeolicus (strain VF5) protein is NADH-quinone oxidoreductase subunit N 2.